Reading from the N-terminus, the 218-residue chain is Cytochrome b6 (218 aa).

The helical transmembrane segment at Ile35 to Phe55 threads the bilayer. Heme c is bound at residue Cys38. Residues His89 and His103 each contribute to the heme b site. Helical transmembrane passes span Ala93–Phe113, Leu119–Tyr139, and Leu189–Ile209. Positions 190 and 205 each coordinate heme b.

Belongs to the cytochrome b family. PetB subfamily. As to quaternary structure, the 4 large subunits of the cytochrome b6-f complex are cytochrome b6, subunit IV (17 kDa polypeptide, PetD), cytochrome f and the Rieske protein, while the 4 small subunits are PetG, PetL, PetM and PetN. The complex functions as a dimer. Heme b is required as a cofactor. The cofactor is heme c.

Its subcellular location is the cellular thylakoid membrane. Component of the cytochrome b6-f complex, which mediates electron transfer between photosystem II (PSII) and photosystem I (PSI), cyclic electron flow around PSI, and state transitions. The polypeptide is Cytochrome b6 (Synechococcus sp. (strain CC9605)).